The sequence spans 373 residues: Mannan endo-1,4-beta-mannosidase A (373 aa).

Positions 1–17 (MKGLFAFGLGLLSLVNA) are cleaved as a signal peptide. Substrate is bound by residues tryptophan 81, asparagine 193, and 194-196 (EPR). Glutamate 194 acts as the Proton donor/acceptor in catalysis. Residues cysteine 197 and cysteine 200 are joined by a disulfide bond. Substrate contacts are provided by glutamate 230, tyrosine 267, and tryptophan 271. Cysteines 289 and 296 form a disulfide. Glutamate 300 serves as the catalytic Nucleophile. The cysteines at positions 308 and 359 are disulfide-linked. Tryptophan 332 provides a ligand contact to substrate.

The protein belongs to the glycosyl hydrolase 5 (cellulase A) family. In terms of assembly, monomer. In terms of processing, not glycosylated.

It localises to the secreted. The catalysed reaction is Random hydrolysis of (1-&gt;4)-beta-D-mannosidic linkages in mannans, galactomannans and glucomannans.. In terms of biological role, endo-1,4-mannanase that catalyzes the random hydrolysis of (1-&gt;4)-beta-D-mannosidic linkages in mannans and heteromannans. It is a crucial enzyme for depolymerization of seed galactomannans and wood galactoglucomannans. Hydrolyzes structurally different mannan polysaccharides, such as galactomannans, glucomannans, and beta-1,4-mannans from different sources, yielding principally mannobiose. Also has transglycosylation activity. This Podospora anserina (strain S / ATCC MYA-4624 / DSM 980 / FGSC 10383) (Pleurage anserina) protein is Mannan endo-1,4-beta-mannosidase A.